We begin with the raw amino-acid sequence, 470 residues long: Glucose-1-phosphate adenylyltransferase (470 aa).

Residues G165, 182 to 183 (EK), and S200 contribute to the alpha-D-glucose 1-phosphate site.

This sequence belongs to the bacterial/plant glucose-1-phosphate adenylyltransferase family. Homotetramer.

The enzyme catalyses alpha-D-glucose 1-phosphate + ATP + H(+) = ADP-alpha-D-glucose + diphosphate. Its pathway is glycan biosynthesis; glycogen biosynthesis. Involved in the biosynthesis of ADP-glucose, a building block required for the elongation reactions to produce glycogen. Catalyzes the reaction between ATP and alpha-D-glucose 1-phosphate (G1P) to produce pyrophosphate and ADP-Glc. This is Glucose-1-phosphate adenylyltransferase from Paenarthrobacter aurescens (strain TC1).